A 201-amino-acid polypeptide reads, in one-letter code: Akirin-2 (201 aa).

Phosphoserine occurs at positions 18 and 21. The Nuclear localization signal motif lies at 23–28; it reads KRRRCA. A Phosphoserine modification is found at S55. The SYVS motif signature appears at 198–201; it reads SYVS.

It belongs to the akirin family. As to quaternary structure, homodimer. Interacts with IPO9; the interaction is direct. Associates with 20S and 26S proteasomes. Interacts with SMARCD1; promoting SWI/SNF complex recruitment. Interacts with NFKBIZ. Interacts with YWHAB. In terms of processing, polyubiquitinated. Polyubiquitination is dependent of UBR5 that extends pre-ubiquitinated AKIRIN2.

The protein localises to the nucleus. Its subcellular location is the cytoplasm. It is found in the membrane. Functionally, molecular adapter that acts as a bridge between a variety of multiprotein complexes, and which is involved in embryonic development, immunity, myogenesis and brain development. Plays a key role in nuclear protein degradation by promoting import of proteasomes into the nucleus: directly binds to fully assembled 20S proteasomes at one end and to nuclear import receptor IPO9 at the other end, bridging them together and mediating the import of pre-assembled proteasome complexes through the nuclear pore. Involved in innate immunity by regulating the production of interleukin-6 (IL6) downstream of Toll-like receptor (TLR): acts by bridging the NF-kappa-B inhibitor NFKBIZ and the SWI/SNF complex, leading to promote induction of IL6. Also involved in adaptive immunity by promoting B-cell activation. Involved in brain development: required for the survival and proliferation of cerebral cortical progenitor cells. Involved in myogenesis: required for skeletal muscle formation and skeletal development, possibly by regulating expression of muscle differentiation factors. Also plays a role in facilitating interdigital tissue regression during limb development. The chain is Akirin-2 from Mus musculus (Mouse).